A 258-amino-acid chain; its full sequence is Axonemal dynein light intermediate polypeptide 1 (258 aa).

Disordered stretches follow at residues 19–60 and 207–231; these read RNTE…CVPD and VNEQ…EEKK. Residues 34–48 are compositionally biased toward low complexity; it reads SPQQPGPSGSAPQLP. A coiled-coil region spans residues 176–255; sequence MRKALQAEQG…LKAQLEGIIA (80 aa).

The protein belongs to the inner dynein arm light chain family. As to quaternary structure, interacts with CFAP45. Interacts with DYNC1H1.

It localises to the cell projection. The protein localises to the cilium. It is found in the flagellum. Its subcellular location is the dynein axonemal particle. The protein resides in the cytoplasm. Involved in sperm flagellum assembly. The protein is Axonemal dynein light intermediate polypeptide 1 (DNALI1) of Macaca fascicularis (Crab-eating macaque).